The sequence spans 413 residues: Cyclic AMP-dependent transcription factor ATF-7 (413 aa).

Positions 1–285 (MGDDRPFVCS…GMVVGTASTM (285 aa)) are transactivation domain. The C2H2-type zinc finger occupies 7 to 31 (FVCSAPGCGQRFTNEDHLAVHKHKH). Position 51 is a phosphothreonine; by MAPK11 (threonine 51). Phosphothreonine occurs at positions 53 and 101. Disordered stretches follow at residues 81–140 (ASDD…TTKP) and 299–337 (HPDA…RRQR). Lysine 107 participates in a covalent cross-link: Glycyl lysine isopeptide (Lys-Gly) (interchain with G-Cter in SUMO1). Composition is skewed to low complexity over residues 114–126 (VDSS…ASSP) and 307–320 (QPQV…PSTG). The segment covering 326–337 (TVDEDPDERRQR) has biased composition (basic and acidic residues). The bZIP domain maps to 332-395 (DERRQRFLER…AQLKQLLLAH (64 aa)). Residues 334-354 (RRQRFLERNRAAASRCRQKRK) are basic motif. The tract at residues 360-388 (LEKKAEELTSQNIQLSNEVTLLRNEVAQL) is leucine-zipper.

Belongs to the bZIP family. As to quaternary structure, homodimer; binds DNA as homodimer. Heterodimer; heterodimerizes with other members of ATF family and with JUN family members. Interacts with JNK2; the interaction does not phosphorylate ATF7 but acts as a docking site for other ATF-associated partners such as JUN family members. Interacts (via its transactivation domain) with TAF12 the interaction potentiates the transactivation activity and is inhibited by ATF7 sumoylation. Interacts with TAF4; the interaction inhibits the TAF12-dependent transactivation. Interacts with MAPK9; the interaction does not phosphorylate ATF7 but acts as a docking site for ATF7-associated partners such as JUN. Interacts with Ku complex components XRCC6 and XRCC7. Interacts with TERT. Post-translationally, on EGF stimulation, phosphorylated first on Thr-53 allowing subsequent phosphorylation on Thr-51. This latter phosphorylation prevents sumoylation, increases binding to TAF12 and enhances transcriptional activity. Social isolation stress as well as TNF-alpha also induce the phosphorylation of ATF7. Phosphorylated in proliferating colonic and small intestinal epithelial cells. In terms of processing, sumoylation delays nuclear localization and inhibits transactivation activity through preventing binding to TAF12. RANBP2 appears to be the specific E3 ligase.

The protein localises to the nucleus. Its subcellular location is the nucleoplasm. It is found in the chromosome. The protein resides in the telomere. Functionally, stress-responsive chromatin regulator that plays a role in various biological processes including innate immunological memory, adipocyte differentiation or telomerase regulation. In absence of stress, contributes to the formation of heterochromatin and heterochromatin-like structure by recruiting histone H3K9 tri- and di-methyltransferases thus silencing the transcription of target genes such as Htr5b, STAT1 in adipocytes, or genes involved in innate immunity in macrophages and adipocytes. Phosphorylation of ATF7 disrupts interactions with histone methyltransferase and enhances the association with coactivators containing histone acetyltransferase and/or histone demethylase, leading to disruption of the heterochromatin-like structure and subsequently transcriptional activation. In response to TNF-alpha, which is induced by various stresses, phosphorylated ATF7 and telomerase are released from telomeres leading to telomere shortening. Also plays a role in maintaining epithelial regenerative capacity and protecting against cell death during intestinal epithelial damage and repair. This chain is Cyclic AMP-dependent transcription factor ATF-7 (Atf7), found in Mus musculus (Mouse).